A 184-amino-acid polypeptide reads, in one-letter code: GTP cyclohydrolase 1 (184 aa).

Cysteine 75, histidine 78, and cysteine 146 together coordinate Zn(2+).

Belongs to the GTP cyclohydrolase I family. Homomer.

The catalysed reaction is GTP + H2O = 7,8-dihydroneopterin 3'-triphosphate + formate + H(+). The protein operates within cofactor biosynthesis; 7,8-dihydroneopterin triphosphate biosynthesis; 7,8-dihydroneopterin triphosphate from GTP: step 1/1. This chain is GTP cyclohydrolase 1, found in Streptococcus pneumoniae (strain Taiwan19F-14).